Reading from the N-terminus, the 515-residue chain is Maturase K (515 aa).

It belongs to the intron maturase 2 family. MatK subfamily.

The protein localises to the plastid. It is found in the chloroplast. Usually encoded in the trnK tRNA gene intron. Probably assists in splicing its own and other chloroplast group II introns. This chain is Maturase K, found in Pinus tabuliformis (Chinese red pine).